The following is a 324-amino-acid chain: Homoserine kinase (324 aa).

100–110 (PLSSGMGSSAA) contacts ATP.

The protein belongs to the GHMP kinase family. Homoserine kinase subfamily.

It is found in the cytoplasm. The catalysed reaction is L-homoserine + ATP = O-phospho-L-homoserine + ADP + H(+). It functions in the pathway amino-acid biosynthesis; L-threonine biosynthesis; L-threonine from L-aspartate: step 4/5. Functionally, catalyzes the ATP-dependent phosphorylation of L-homoserine to L-homoserine phosphate. The sequence is that of Homoserine kinase from Chlorobaculum tepidum (strain ATCC 49652 / DSM 12025 / NBRC 103806 / TLS) (Chlorobium tepidum).